Consider the following 129-residue polypeptide: MARVKRAVNAQKKRRTVLKASKGYRGQRSRLYRKAKEQQLHSLTYAYRDRRARKGEFRKLWISRINAAARANDITYNRLIQGLKAAGVEVDRKNLAEIAVSDAAAFTALVEVAKAALPEDVNAPSGEAA.

It belongs to the bacterial ribosomal protein bL20 family.

Its function is as follows. Binds directly to 23S ribosomal RNA and is necessary for the in vitro assembly process of the 50S ribosomal subunit. It is not involved in the protein synthesizing functions of that subunit. The protein is Large ribosomal subunit protein bL20 of Mycobacterium sp. (strain JLS).